The chain runs to 107 residues: Ribonuclease P protein component 4 (107 aa).

Positions 66, 69, 92, and 95 each coordinate Zn(2+).

The protein belongs to the eukaryotic/archaeal RNase P protein component 4 family. Consists of a catalytic RNA component and at least 4-5 protein subunits. It depends on Zn(2+) as a cofactor.

Its subcellular location is the cytoplasm. The enzyme catalyses Endonucleolytic cleavage of RNA, removing 5'-extranucleotides from tRNA precursor.. Part of ribonuclease P, a protein complex that generates mature tRNA molecules by cleaving their 5'-ends. The protein is Ribonuclease P protein component 4 of Methanosarcina acetivorans (strain ATCC 35395 / DSM 2834 / JCM 12185 / C2A).